Reading from the N-terminus, the 399-residue chain is Maltose excess protein 1-like, chloroplastic (399 aa).

Residues 1-67 (MSSSVSSVRL…RRRRYALPPV (67 aa)) constitute a chloroplast transit peptide. Helical transmembrane passes span 93–113 (FAGAANVPFLLLQLPQIILNA), 123–143 (ALFAVPWLGMLTGLLGNLSLL), 154–174 (AVIVQTLGVISTYVVIAQLAM), 180–202 (LPQFVATSAVVAAGLLLNFLNYF), 217–237 (ITIGGLAVLPQVMWSTFVPFI), 238–258 (PNSLLPGIISGSLAATAVVMA), 268–288 (INFVGSLSGWTATLLFMWMPV), 306–326 (AFTMLLAMIGNGLMIPRAVFI), and 361–381 (FLATTFGLLLWLGFTLWRDTI).

Its subcellular location is the plastid. The protein resides in the chloroplast inner membrane. Probable maltose transporter. Essential for the conversion of starch to sucrose in leaves at night, probably via the export of maltose from the chloroplast. The chain is Maltose excess protein 1-like, chloroplastic from Oryza sativa subsp. japonica (Rice).